We begin with the raw amino-acid sequence, 58 residues long: Small ribosomal subunit protein bS21 (58 aa).

Residues 24 to 58 (TKAGTLQEARKREHYEKPSVKRKRKSEAARKRKKI) form a disordered region. Positions 31–42 (EARKREHYEKPS) are enriched in basic and acidic residues. The span at 43–58 (VKRKRKSEAARKRKKI) shows a compositional bias: basic residues.

It belongs to the bacterial ribosomal protein bS21 family.

This Streptococcus thermophilus (strain CNRZ 1066) protein is Small ribosomal subunit protein bS21.